Reading from the N-terminus, the 410-residue chain is Putative formamidase C869.04 (410 aa).

This sequence belongs to the acetamidase/formamidase family. Homotrimer.

It localises to the cytoplasm. The protein resides in the nucleus. The enzyme catalyses formamide + H2O = formate + NH4(+). Its function is as follows. Hydrolyzes formamide with the production of ammonia which can be used as a source of nitrogen for growth. May also act on acetamide, propanamide and butanamide. This is Putative formamidase C869.04 from Schizosaccharomyces pombe (strain 972 / ATCC 24843) (Fission yeast).